The primary structure comprises 527 residues: Mitochondrial substrate carrier family protein V (527 aa).

Residues 1-14 (MNSSDFKKSFKEST) show a composition bias toward basic and acidic residues. Residues 1–29 (MNSSDFKKSFKESTENNSNTYRPSKTLNT) form a disordered region. At 1–132 (MNSSDFKKSF…VSKKSISKEN (132 aa)) the chain is on the mitochondrial intermembrane side. The segment covering 15–29 (ENNSNTYRPSKTLNT) has biased composition (polar residues). Solcar repeat units lie at residues 130–220 (KENV…CKKH), 253–345 (MTVP…FKII), and 430–519 (VNMI…CKDL). The chain crosses the membrane as a helical span at residues 133–153 (VNYLVSGSIAGAISRSATAGF). The Mitochondrial matrix segment spans residues 154 to 187 (ERLTIIQQVQGMSQNLSQGYVGCIAAMKEMVKRE). A helical membrane pass occupies residues 188–208 (GFKSIWKGNGANIVKVSPNSG). Topologically, residues 209-258 (IRFLTYEFCKKHFLDNSSNHPSSSSIENGIDGNGVGCGSGSEMKMTVPQT) are mitochondrial intermembrane. A helical transmembrane segment spans residues 259-279 (MFSGAMAGLTSTFFTYPLDVV). Residues 280-324 (RIRLSLQGSCSNDYAAHRYNGITHSFFKIHKDEGVKGLYKGLGTS) are Mitochondrial matrix-facing. A helical membrane pass occupies residues 325-345 (IASIVPWVSISFATYEGFKII). At 346-435 (CKKMILNYQI…LKKGVNMICD (90 aa)) the chain is on the mitochondrial intermembrane side. The helical transmembrane segment at 436–456 (FVCGALSGAVTMTVCYPLDVL) threads the bilayer. The Mitochondrial matrix segment spans residues 457–487 (RRRMMIQGIGGNKVLYKNGWDATKKILSNEG). The chain crosses the membrane as a helical span at residues 488–508 (LVAFYHGIIPAYFKVVPTVAI). The Mitochondrial intermembrane segment spans residues 509-527 (SFAVYEICKDLGSNKYQQK).

The protein belongs to the mitochondrial carrier (TC 2.A.29) family.

The protein localises to the mitochondrion inner membrane. Functionally, mitochondrial solute carriers shuttle metabolites, nucleotides, and cofactors through the mitochondrial inner membrane. This Dictyostelium discoideum (Social amoeba) protein is Mitochondrial substrate carrier family protein V (mcfV).